Consider the following 607-residue polypeptide: Leucine-rich repeat-containing protein 63 (607 aa).

LRR repeat units follow at residues 357–378 (QLVYLNLSYNDLHQFPGEVLYL), 380–401 (NLQVLKLRNNPIREIPSEIQQL), 403–424 (YLRKFTIAFNFITSLPAGLFCL), 426–447 (YLEELDVSYNEIENIPNEIQKL), 449–470 (SLEKLTVDGTNITAFPPGILKL), 471–497 (NLVKLEFENTFTIPPFWLENSCNNPPR), and 498–524 (LTHICSLFIVKNNLHKILDYDPVVVQK).

This is Leucine-rich repeat-containing protein 63 (Lrrc63) from Rattus norvegicus (Rat).